The following is a 75-amino-acid chain: UPF0270 protein PFL_4336 (75 aa).

This sequence belongs to the UPF0270 family.

This chain is UPF0270 protein PFL_4336, found in Pseudomonas fluorescens (strain ATCC BAA-477 / NRRL B-23932 / Pf-5).